A 122-amino-acid chain; its full sequence is Large ribosomal subunit protein bL17 (122 aa).

It belongs to the bacterial ribosomal protein bL17 family. In terms of assembly, part of the 50S ribosomal subunit. Contacts protein L32.

The chain is Large ribosomal subunit protein bL17 from Staphylococcus carnosus (strain TM300).